The primary structure comprises 749 residues: Phototropin (749 aa).

The 74-residue stretch at proline 7–glycine 80 folds into the PAS 1 domain. Residues asparagine 56–glutamine 61, arginine 74, asparagine 89, asparagine 99, and glutamine 120 each bind FMN. Position 57 is an S-4a-FMN cysteine (cysteine 57). Residues glutamate 81–asparagine 135 form the PAC 1 domain. One can recognise a PAS 2 domain in the interval valine 200–glycine 273. Residues serine 274–valine 328 form the PAC 2 domain. Residues phenylalanine 404–phenylalanine 712 form the Protein kinase domain. Residues leucine 410 to valine 418 and lysine 433 contribute to the ATP site. Catalysis depends on aspartate 529, which acts as the Proton acceptor. 2 disordered regions span residues lysine 563–glycine 591 and proline 729–tyrosine 749. The AGC-kinase C-terminal domain maps to lysine 713–tyrosine 749. Residues lysine 734 to tyrosine 749 show a composition bias toward low complexity.

This sequence belongs to the protein kinase superfamily. AGC Ser/Thr protein kinase family. FMN serves as cofactor. In terms of processing, autophosphorylated in response to blue light irradiation. 2 molecules of FMN bind covalently to cysteines after exposure to blue light and are reversed in the dark. Expressed in gametes, pre-gametes and gametes generated by pre-gametes (at protein level).

Its subcellular location is the membrane. It carries out the reaction L-seryl-[protein] + ATP = O-phospho-L-seryl-[protein] + ADP + H(+). The catalysed reaction is L-threonyl-[protein] + ATP = O-phospho-L-threonyl-[protein] + ADP + H(+). Protein kinase that acts as a blue light photoreceptor. Required for non-photochemical quenching (NPQ), a mechanism that converts and dissipates the harmful excess absorbed light energy into heat and protect the photosynthetic apparatus from photo-oxidative damage. Controls the energy-dependent chlorophyll fluorescence quenching (qE) activity of chlorophyll excited states by inducing the expression of the qE effector protein LHCSR3 in high light intensities. The chain is Phototropin from Chlamydomonas reinhardtii (Chlamydomonas smithii).